We begin with the raw amino-acid sequence, 153 residues long: Ribosomal RNA large subunit methyltransferase H (153 aa).

S-adenosyl-L-methionine is bound by residues L71 and G102.

Belongs to the RNA methyltransferase RlmH family. Homodimer.

It localises to the cytoplasm. The enzyme catalyses pseudouridine(1915) in 23S rRNA + S-adenosyl-L-methionine = N(3)-methylpseudouridine(1915) in 23S rRNA + S-adenosyl-L-homocysteine + H(+). Its function is as follows. Specifically methylates the pseudouridine at position 1915 (m3Psi1915) in 23S rRNA. The protein is Ribosomal RNA large subunit methyltransferase H of Anaeromyxobacter dehalogenans (strain 2CP-1 / ATCC BAA-258).